The sequence spans 291 residues: 4-hydroxy-tetrahydrodipicolinate synthase (291 aa).

A pyruvate-binding site is contributed by Thr45. Tyr133 serves as the catalytic Proton donor/acceptor. Lys161 acts as the Schiff-base intermediate with substrate in catalysis. Ile203 contributes to the pyruvate binding site.

The protein belongs to the DapA family. As to quaternary structure, homotetramer; dimer of dimers.

It localises to the cytoplasm. It catalyses the reaction L-aspartate 4-semialdehyde + pyruvate = (2S,4S)-4-hydroxy-2,3,4,5-tetrahydrodipicolinate + H2O + H(+). It participates in amino-acid biosynthesis; L-lysine biosynthesis via DAP pathway; (S)-tetrahydrodipicolinate from L-aspartate: step 3/4. Functionally, catalyzes the condensation of (S)-aspartate-beta-semialdehyde [(S)-ASA] and pyruvate to 4-hydroxy-tetrahydrodipicolinate (HTPA). The protein is 4-hydroxy-tetrahydrodipicolinate synthase of Methylococcus capsulatus (strain ATCC 33009 / NCIMB 11132 / Bath).